The chain runs to 189 residues: Fine tangled pili major subunit (189 aa).

Belongs to the Dps family. As to quaternary structure, hexamer.

The protein localises to the fimbrium. Functionally, may contribute to bacterial adherence, or be involved in the protection of the bacteria, or both. The polypeptide is Fine tangled pili major subunit (ftpA) (Haemophilus ducreyi (strain 35000HP / ATCC 700724)).